The following is a 154-amino-acid chain: Small ribosomal subunit protein bS6 (154 aa).

The interval 107 to 154 (KSDDRERGFRGPKPPGRFESGRKRGYDDREEFRARAGGDDDDRGLDQE) is disordered. Positions 125-154 (ESGRKRGYDDREEFRARAGGDDDDRGLDQE) are enriched in basic and acidic residues.

Belongs to the bacterial ribosomal protein bS6 family.

In terms of biological role, binds together with bS18 to 16S ribosomal RNA. This Granulibacter bethesdensis (strain ATCC BAA-1260 / CGDNIH1) protein is Small ribosomal subunit protein bS6.